Here is an 849-residue protein sequence, read N- to C-terminus: Autoinducer 1 sensor kinase/phosphatase LuxN (849 aa).

7 consecutive transmembrane segments (helical) span residues 9 to 29 (IVYA…MWLF), 41 to 61 (VIFG…IAWI), 160 to 180 (SYFF…LVAM), 196 to 216 (IAGI…MTYF), 220 to 242 (FSLT…YALL), 251 to 275 (YIAY…AIFI), and 283 to 301 (WLIA…QLLY). Residues 468–683 (SIAHEMRNPL…EFHLYFPVVP (216 aa)) enclose the Histidine kinase domain. His471 carries the post-translational modification Phosphohistidine; by autocatalysis. One can recognise a Response regulatory domain in the interval 722–835 (TVLIVDDKEV…ALRHVLGNWL (114 aa)). A 4-aspartylphosphate modification is found at Asp771.

Its subcellular location is the cell inner membrane. It catalyses the reaction ATP + protein L-histidine = ADP + protein N-phospho-L-histidine.. Its activity is regulated as follows. The phosphatase activity is constitutive and the kinase activity is regulated by the presence or absence of AI-1. At low cell density the kinase activity overrides the phosphatase activity. At low cell density, in the absence of AI-1 (autoinducer 1), LuxN has a kinase activity and autophosphorylates on His-471. The phosphoryl group is then transferred on Asp-771 of the response regulator domain. The phosphoryl group is transferred to LuxU, and ultimately to LuxO. At high cell density, in the presence of AI-1, the kinase activity is inactivated, and the response regulator domain has a phosphatase activity. LuxN phosphatase acts on itself. As LuxU could function to establish an equilibrium between the aspartyl-phosphate of LuxN and the aspartyl-phosphate of LuxO, LuxU transfers phosphate from LuxO to LuxN and finally phosphate is drained from the system. This is Autoinducer 1 sensor kinase/phosphatase LuxN (luxN) from Vibrio campbellii (strain ATCC BAA-1116).